The following is a 281-amino-acid chain: Fibrinogen-like protein 1-like protein (281 aa).

Residues 1–33 form the signal peptide; sequence MGLQAGTRQLHGNLILLPVAVVMLLLCTSPVCA. Residues 34 to 246 enclose the Fibrinogen C-terminal domain; it reads TASVGLPADC…RPSSWSNPPM (213 aa). 2 disulfides stabilise this stretch: C43-C69 and C201-C213. The segment covering 260-269 has biased composition (low complexity); sequence PSRSPSLPSP. The tract at residues 260 to 281 is disordered; the sequence is PSRSPSLPSPITATHTVRNQLQ. Positions 270-281 are enriched in polar residues; the sequence is ITATHTVRNQLQ.

As to expression, expressed in smal intestine, colon and lung.

In terms of biological role, shows a cytidine deaminase activity on 2'-deoxycytidine (in vitro), however shows no RNA editing activity (in vitro). The polypeptide is Fibrinogen-like protein 1-like protein (Gallus gallus (Chicken)).